We begin with the raw amino-acid sequence, 270 residues long: UPF0162 protein PA3419 (270 aa).

This sequence belongs to the UPF0162 family.

The sequence is that of UPF0162 protein PA3419 from Pseudomonas aeruginosa (strain ATCC 15692 / DSM 22644 / CIP 104116 / JCM 14847 / LMG 12228 / 1C / PRS 101 / PAO1).